Consider the following 425-residue polypeptide: MLSRICGNGIRLTRTRLQFQPSIVTFRDYSNPAPKRGFLNNLIDNVRDEMQKNKELQEHQQQLKARMQELNESDALKDARKKFEIVEKETLKSSEVVKQKIEELSDHMKKMVHEIQKTEAGKKMTEAGAEALKQARKAAEHVEKVAEKVGDTEVYKHVSTSMKTVKDEIDNIADVRMYSRPEALTKRTDGFDLEKERVVEANDSATDVTLHKDSKWYSGWKNFSESNTYYHKLLDWKIKYDESDNMAVRMMRGVTEKIGSVFSGQNEVSEVLTEIHKIDANFDKQEWLRFCETKIIPNILEAFIRFDLEVLQSWCHERAYTQLSTVVKEYQKMHFSTKDSRIIDINKVEMATGKMMEQGPVLIISFQVYMINVTKNADGKVVEGDPDNPKRINHIWVLCRDVEEYNPALAWKLLEVHMQETPLAL.

Residues 38-149 (FLNNLIDNVR…EHVEKVAEKV (112 aa)) adopt a coiled-coil conformation.

This sequence belongs to the Tim44 family. In terms of assembly, probable component of the PAM complex at least composed of a mitochondrial HSP70 protein, GrpE, tin-44, tim-16 and tim-14/dnj-21. The complex interacts with the tim-23 component of the TIM23 complex.

The protein localises to the mitochondrion inner membrane. Functionally, essential component of the PAM complex, a complex required for the translocation of transit peptide-containing proteins from the inner membrane into the mitochondrial matrix in an ATP-dependent manner. Recruits mitochondrial HSP70 to drive protein translocation into the matrix using ATP as an energy source. This chain is Probable mitochondrial import inner membrane translocase subunit tin-44, found in Caenorhabditis elegans.